Here is a 274-residue protein sequence, read N- to C-terminus: Ribosomal RNA small subunit methyltransferase A (274 aa).

Positions 28, 30, 55, 77, 103, and 122 each coordinate S-adenosyl-L-methionine.

It belongs to the class I-like SAM-binding methyltransferase superfamily. rRNA adenine N(6)-methyltransferase family. RsmA subfamily.

It is found in the cytoplasm. It catalyses the reaction adenosine(1518)/adenosine(1519) in 16S rRNA + 4 S-adenosyl-L-methionine = N(6)-dimethyladenosine(1518)/N(6)-dimethyladenosine(1519) in 16S rRNA + 4 S-adenosyl-L-homocysteine + 4 H(+). Functionally, specifically dimethylates two adjacent adenosines (A1518 and A1519) in the loop of a conserved hairpin near the 3'-end of 16S rRNA in the 30S particle. May play a critical role in biogenesis of 30S subunits. This is Ribosomal RNA small subunit methyltransferase A from Rhizobium meliloti (strain 1021) (Ensifer meliloti).